The primary structure comprises 84 residues: Chymotrypsin inhibitor Ani s 6 (84 aa).

Positions 1–22 (MFQSTFFLVLMVCVATARFANK) are cleaved as a signal peptide. Disulfide bonds link Cys25-Cys58, Cys34-Cys54, Cys38-Cys50, Cys42-Cys79, and Cys60-Cys73. In terms of domain architecture, TIL spans 25 to 79 (CPPNEEYNECGNPCQEKCDNGEPVICTYQCEHRCFCKQGYVRLTEDGECVPEEFC).

It belongs to the serine protease inhibitor-like (TIL domain-containing) family.

The protein resides in the secreted. Functionally, inhibits alpha-chymotrypsin, but not trypsin. This is Chymotrypsin inhibitor Ani s 6 from Anisakis simplex (Herring worm).